A 99-amino-acid chain; its full sequence is Ferredoxin-2 (99 aa).

One can recognise a 2Fe-2S ferredoxin-type domain in the interval 4–96; sequence YQVRLINKKR…DCTIRTHQEA (93 aa). [2Fe-2S] cluster is bound by residues cysteine 42, cysteine 47, cysteine 50, and cysteine 80.

This sequence belongs to the 2Fe2S plant-type ferredoxin family. It depends on [2Fe-2S] cluster as a cofactor.

Functionally, ferredoxins are iron-sulfur proteins that transfer electrons in a wide variety of metabolic reactions. Donates electrons to the nitrogenase. The protein is Ferredoxin-2 (fdxH) of Leptolyngbya boryana (Plectonema boryanum).